A 450-amino-acid polypeptide reads, in one-letter code: Phosphoglucosamine mutase (450 aa).

Ser102 (phosphoserine intermediate) is an active-site residue. Positions 102, 243, 245, and 247 each coordinate Mg(2+). Ser102 carries the phosphoserine modification.

The protein belongs to the phosphohexose mutase family. The cofactor is Mg(2+). Activated by phosphorylation.

It carries out the reaction alpha-D-glucosamine 1-phosphate = D-glucosamine 6-phosphate. Catalyzes the conversion of glucosamine-6-phosphate to glucosamine-1-phosphate. In Allorhizobium ampelinum (strain ATCC BAA-846 / DSM 112012 / S4) (Agrobacterium vitis (strain S4)), this protein is Phosphoglucosamine mutase.